The primary structure comprises 638 residues: DNA-directed RNA polymerase I subunit RPA1 (638 aa).

Residues 297-317 (EYDEEDDESSGESEVREGDEE) show a composition bias toward acidic residues. Residues 297-321 (EYDEEDDESSGESEVREGDEEQEKK) form a disordered region.

The protein belongs to the RNA polymerase beta' chain family. As to quaternary structure, each class of RNA polymerase is assembled from 9 to 14 different polypeptides. This subunit is the largest component of RNA polymerase I.

The protein resides in the nucleus. It catalyses the reaction RNA(n) + a ribonucleoside 5'-triphosphate = RNA(n+1) + diphosphate. Its function is as follows. DNA-dependent RNA polymerase catalyzes the transcription of DNA into RNA using the four ribonucleoside triphosphates as substrates. RNA polymerase I is essentially used to transcribe ribosomal DNA units. In Euplotoides octocarinatus (Freshwater ciliate), this protein is DNA-directed RNA polymerase I subunit RPA1 (RPA1).